We begin with the raw amino-acid sequence, 133 residues long: ATP synthase epsilon chain, chloroplastic (133 aa).

The protein belongs to the ATPase epsilon chain family. As to quaternary structure, F-type ATPases have 2 components, CF(1) - the catalytic core - and CF(0) - the membrane proton channel. CF(1) has five subunits: alpha(3), beta(3), gamma(1), delta(1), epsilon(1). CF(0) has three main subunits: a, b and c.

It localises to the plastid. It is found in the chloroplast thylakoid membrane. Functionally, produces ATP from ADP in the presence of a proton gradient across the membrane. The sequence is that of ATP synthase epsilon chain, chloroplastic from Jasminum nudiflorum (Winter jasmine).